The primary structure comprises 184 residues: Large ribosomal subunit protein uL6 (184 aa).

The protein belongs to the universal ribosomal protein uL6 family. As to quaternary structure, part of the 50S ribosomal subunit.

In terms of biological role, this protein binds to the 23S rRNA, and is important in its secondary structure. It is located near the subunit interface in the base of the L7/L12 stalk, and near the tRNA binding site of the peptidyltransferase center. This Cytophaga hutchinsonii (strain ATCC 33406 / DSM 1761 / CIP 103989 / NBRC 15051 / NCIMB 9469 / D465) protein is Large ribosomal subunit protein uL6.